A 461-amino-acid polypeptide reads, in one-letter code: Eukaryotic translation initiation factor 3 subunit M (461 aa).

The disordered stretch occupies residues 42-61; sequence LLEPLRQQEQSDAEPDRKQR. Residues 205–376 enclose the PCI domain; sequence DQELAQTHVV…SEFLVHRATY (172 aa). Positions 422-461 are disordered; sequence AAEEAAQGKSGDKKGDRRQRRDQPQQSQPAPEAATAVAAE. Residues 431-444 show a composition bias toward basic and acidic residues; that stretch reads SGDKKGDRRQRRDQ. Positions 445-461 are enriched in low complexity; it reads PQQSQPAPEAATAVAAE.

It belongs to the eIF-3 subunit M family. As to quaternary structure, component of the eukaryotic translation initiation factor 3 (eIF-3) complex.

It is found in the cytoplasm. In terms of biological role, component of the eukaryotic translation initiation factor 3 (eIF-3) complex, which is involved in protein synthesis of a specialized repertoire of mRNAs and, together with other initiation factors, stimulates binding of mRNA and methionyl-tRNAi to the 40S ribosome. The eIF-3 complex specifically targets and initiates translation of a subset of mRNAs involved in cell proliferation. This is Eukaryotic translation initiation factor 3 subunit M from Aspergillus terreus (strain NIH 2624 / FGSC A1156).